A 363-amino-acid chain; its full sequence is tRNA(Met) cytidine acetate ligase (363 aa).

ATP is bound by residues 7–20 (IAEF…HKYL), Gly-96, Asn-152, and Arg-175.

The protein belongs to the TmcAL family.

It localises to the cytoplasm. It carries out the reaction cytidine(34) in elongator tRNA(Met) + acetate + ATP = N(4)-acetylcytidine(34) in elongator tRNA(Met) + AMP + diphosphate. Its function is as follows. Catalyzes the formation of N(4)-acetylcytidine (ac(4)C) at the wobble position of elongator tRNA(Met), using acetate and ATP as substrates. First activates an acetate ion to form acetyladenylate (Ac-AMP) and then transfers the acetyl group to tRNA to form ac(4)C34. This chain is tRNA(Met) cytidine acetate ligase, found in Streptococcus thermophilus (strain CNRZ 1066).